The following is a 430-amino-acid chain: Long-chain specific acyl-CoA dehydrogenase, mitochondrial (430 aa).

A mitochondrion-targeting transit peptide spans 1 to 30 (MAARLLLRSLRVLSARSATLPPPSARCSHS). At lysine 42 the chain carries N6-acetyllysine. Phosphoserine occurs at positions 54 and 55. N6-acetyllysine; alternate occurs at positions 66 and 81. Residues lysine 66 and lysine 81 each carry the N6-succinyllysine; alternate modification. N6-acetyllysine occurs at positions 92 and 95. Lysine 165 carries the N6-succinyllysine modification. Position 170 to 179 (170 to 179 (IAMTEPGAGS)) interacts with FAD. Serine 179 contacts substrate. Serine 191 carries the phosphoserine modification. 203 to 205 (FIT) is an FAD binding site. 227-228 (AH) serves as a coordination point for substrate. At lysine 240 the chain carries N6-succinyllysine. Lysine 254 and lysine 279 each carry N6-acetyllysine; alternate. N6-succinyllysine; alternate occurs at positions 254 and 279. Substrate-binding positions include tyrosine 282 and 289-292 (PQER). Glutamate 291 serves as the catalytic Proton acceptor. Arginine 317 is an FAD binding site. Lysine 318 is modified (N6-acetyllysine). Lysine 322 bears the N6-acetyllysine; alternate mark. Lysine 322 is modified (N6-succinyllysine; alternate). Glutamine 328 is a binding site for FAD. Lysine 358 is subject to N6-acetyllysine. Serine 362 carries the phosphoserine modification. Residue 385 to 389 (QLHGG) coordinates FAD. 412 to 413 (GG) contacts substrate. 414-416 (TNE) provides a ligand contact to FAD.

This sequence belongs to the acyl-CoA dehydrogenase family. Homotetramer. It depends on FAD as a cofactor. Post-translationally, acetylation at Lys-318 and Lys-322 in proximity of the cofactor-binding sites strongly reduces catalytic activity. These sites are deacetylated by SIRT3.

Its subcellular location is the mitochondrion matrix. It catalyses the reaction a long-chain 2,3-saturated fatty acyl-CoA + oxidized [electron-transfer flavoprotein] + H(+) = a long-chain (2E)-enoyl-CoA + reduced [electron-transfer flavoprotein]. The enzyme catalyses octanoyl-CoA + oxidized [electron-transfer flavoprotein] + H(+) = (2E)-octenoyl-CoA + reduced [electron-transfer flavoprotein]. The catalysed reaction is decanoyl-CoA + oxidized [electron-transfer flavoprotein] + H(+) = (2E)-decenoyl-CoA + reduced [electron-transfer flavoprotein]. It carries out the reaction dodecanoyl-CoA + oxidized [electron-transfer flavoprotein] + H(+) = (2E)-dodecenoyl-CoA + reduced [electron-transfer flavoprotein]. It catalyses the reaction tetradecanoyl-CoA + oxidized [electron-transfer flavoprotein] + H(+) = (2E)-tetradecenoyl-CoA + reduced [electron-transfer flavoprotein]. The enzyme catalyses oxidized [electron-transfer flavoprotein] + hexadecanoyl-CoA + H(+) = (2E)-hexadecenoyl-CoA + reduced [electron-transfer flavoprotein]. The catalysed reaction is octadecanoyl-CoA + oxidized [electron-transfer flavoprotein] + H(+) = (2E)-octadecenoyl-CoA + reduced [electron-transfer flavoprotein]. It carries out the reaction (5E)-tetradecenoyl-CoA + oxidized [electron-transfer flavoprotein] + H(+) = (2E,5E)-tetradecadienoyl-CoA + reduced [electron-transfer flavoprotein]. It catalyses the reaction (5Z)-tetradecenoyl-CoA + oxidized [electron-transfer flavoprotein] + H(+) = (2E,5Z)-tetradecadienoyl-CoA + reduced [electron-transfer flavoprotein]. The enzyme catalyses oxidized [electron-transfer flavoprotein] + (9Z)-octadecenoyl-CoA + H(+) = (2E,9Z)-octadecadienoyl-CoA + reduced [electron-transfer flavoprotein]. The catalysed reaction is hexanoyl-CoA + oxidized [electron-transfer flavoprotein] + H(+) = (2E)-hexenoyl-CoA + reduced [electron-transfer flavoprotein]. It carries out the reaction eicosanoyl-CoA + oxidized [electron-transfer flavoprotein] + H(+) = (2E)-eicosenoyl-CoA + reduced [electron-transfer flavoprotein]. It catalyses the reaction docosanoyl-CoA + oxidized [electron-transfer flavoprotein] + H(+) = (2E)-docosenoyl-CoA + reduced [electron-transfer flavoprotein]. The enzyme catalyses tetracosanoyl-CoA + oxidized [electron-transfer flavoprotein] + H(+) = (2E)-tetracosenoyl-CoA + reduced [electron-transfer flavoprotein]. Its pathway is lipid metabolism; mitochondrial fatty acid beta-oxidation. With respect to regulation, inhibited by crotonyl-CoA, 2-octenoyl-CoA and 2-hexadecenoyl-CoA. Long-chain specific acyl-CoA dehydrogenase is one of the acyl-CoA dehydrogenases that catalyze the first step of mitochondrial fatty acid beta-oxidation, an aerobic process breaking down fatty acids into acetyl-CoA and allowing the production of energy from fats. The first step of fatty acid beta-oxidation consists in the removal of one hydrogen from C-2 and C-3 of the straight-chain fatty acyl-CoA thioester, resulting in the formation of trans-2-enoyl-CoA. Among the different mitochondrial acyl-CoA dehydrogenases, long-chain specific acyl-CoA dehydrogenase can act on saturated and unsaturated acyl-CoAs with 6 to 24 carbons with a preference for 8 to 18 carbons long primary chains. The protein is Long-chain specific acyl-CoA dehydrogenase, mitochondrial of Rattus norvegicus (Rat).